Here is a 225-residue protein sequence, read N- to C-terminus: Uridylate kinase (225 aa).

Residue 9–10 coordinates ATP; the sequence is GS. G44 is a UMP binding site. ATP is bound by residues G45 and R49. Residues D66 and 114–120 contribute to the UMP site; that span reads THPGHTT. Residues T140, N141, Y146, and D149 each coordinate ATP.

It belongs to the UMP kinase family. Homohexamer.

Its subcellular location is the cytoplasm. The catalysed reaction is UMP + ATP = UDP + ADP. Its pathway is pyrimidine metabolism; CTP biosynthesis via de novo pathway; UDP from UMP (UMPK route): step 1/1. With respect to regulation, inhibited by UTP. In terms of biological role, catalyzes the reversible phosphorylation of UMP to UDP. The protein is Uridylate kinase of Thermococcus kodakarensis (strain ATCC BAA-918 / JCM 12380 / KOD1) (Pyrococcus kodakaraensis (strain KOD1)).